A 340-amino-acid chain; its full sequence is Cell growth-regulated gene 1 protein (340 aa).

The protein belongs to the SMP-30/CGR1 family.

Involved in the cell growth regulation. This chain is Cell growth-regulated gene 1 protein (CGR1), found in Candida albicans (strain SC5314 / ATCC MYA-2876) (Yeast).